A 288-amino-acid chain; its full sequence is Syntaxin-1A (288 aa).

Residues Met-1–Asp-13 show a composition bias toward basic and acidic residues. The tract at residues Met-1–Val-20 is disordered. The Cytoplasmic portion of the chain corresponds to Met-1–Lys-265. Residues Ser-14, Ser-64, and Ser-95 each carry the phosphoserine modification. Residues Asp-68 to Ser-109 are a coiled coil. Ser-188 carries the phosphoserine; by DAPK1 modification. Residues Leu-192–Ala-254 form the t-SNARE coiled-coil homology domain. Glycyl lysine isopeptide (Lys-Gly) (interchain with G-Cter in SUMO) cross-links involve residues Lys-252, Lys-253, and Lys-256. Residues Ile-266–Gly-288 traverse the membrane as a helical; Anchor for type IV membrane protein segment.

It belongs to the syntaxin family. As to quaternary structure, part of the SNARE core complex containing SNAP25, VAMP2 and STX1A; this complex constitutes the basic catalytic machinery of the complex neurotransmitter release apparatus. The SNARE complex interacts with CPLX1. Interacts with STXBP1. The interaction with STXBP1 promotes assembly of the SNARE complex. Interacts (via C-terminus) with KCNB1 (via C-terminus); the interaction increases in a calcium-dependent manner and induces a pore-independent enhancement of exocytosis in neuroendocrine cells, chromaffin cells, pancreatic beta cells and from the soma of dorsal root ganglia (DRG) neurons. Interacts with SYTL4. Interacts with STXBP6. Interacts with PLCL1 (via C2 domain). Interacts with OTOF. Interacts with LGI3. Interacts (via the H3 domain) with SLC6A4 (via the N-terminus); this interaction regulates SLC4A6 channel conductance in thalamocortical neurons. Interacts with SYT6 and SYT8; the interaction is Ca(2+)-dependent. Interacts with VAMP8. Interacts with SNAP23. Interacts with VAPA and SYBU. Interacts with PRRT2. Interacts with SEPT8. Interacts with STXBP5L. Interacts with synaptotagmin-1/SYT1. Interacts with SEPTIN5; in the cerebellar cortex. Interacts with SEPTIN4; in the striatum. In terms of processing, phosphorylated by CK2. Phosphorylation at Ser-188 by DAPK1 significantly decreases its interaction with STXBP1. Sumoylated, sumoylation is required for regulation of synaptic vesicle endocytosis. Post-translationally, (Microbial infection) Targeted and hydrolyzed by C.botulinum neurotoxin type C (BoNT/C) which inhibits neurotransmitter release. Probably hydrolyzes the 253-Lys-|-Ala-254 bond.

The protein localises to the cytoplasmic vesicle. Its subcellular location is the secretory vesicle. The protein resides in the synaptic vesicle membrane. It is found in the synapse. It localises to the synaptosome. The protein localises to the cell membrane. Its function is as follows. Plays an essential role in hormone and neurotransmitter calcium-dependent exocytosis and endocytosis. Part of the SNARE (Soluble NSF Attachment Receptor) complex composed of SNAP25, STX1A and VAMP2 which mediates the fusion of synaptic vesicles with the presynaptic plasma membrane. STX1A and SNAP25 are localized on the plasma membrane while VAMP2 resides in synaptic vesicles. The pairing of the three SNAREs from the N-terminal SNARE motifs to the C-terminal anchors leads to the formation of the SNARE complex, which brings membranes into close proximity and results in final fusion. Participates in the calcium-dependent regulation of acrosomal exocytosis in sperm. Also plays an important role in the exocytosis of hormones such as insulin or glucagon-like peptide 1 (GLP-1). In Bos taurus (Bovine), this protein is Syntaxin-1A (STX1A).